The sequence spans 336 residues: Prenytransferase ascA (336 aa).

The segment at 1-26 is disordered; sequence MAAKSRSPKRGTSEKTPLVEKEAPYQ. The span at 11-23 shows a compositional bias: basic and acidic residues; the sequence is GTSEKTPLVEKEA. 8 helical membrane passes run 52-72, 74-94, 131-151, 179-199, 206-226, 251-271, 272-292, and 314-334; these read PHGNYMIYFPHIIGLMYASAI, PTELSVLGHRAAIFAIWTFLM, GHVFTLILTLLGFAAIQSLPI, VILGSTLASTIALSAYSVGLP, FVPTLCLSATIMLLVVFYDVV, LEGLFAFITLSIAGSLTTLGY, LVGMGHWFYLFSVGGLTFGLV, and FAILNLLTGFIMEYATKDYVV.

It belongs to the UbiA prenyltransferase family. The cofactor is Mg(2+).

The protein resides in the membrane. The enzyme catalyses orsellinate + (2E,6E)-farnesyl diphosphate = ilicicolinate B + diphosphate. It functions in the pathway secondary metabolite biosynthesis; terpenoid biosynthesis. In terms of biological role, prenytransferase; part of the asc-1 gene cluster that mediates the biosynthesis of both ascochlorin and ascofuranone, a strong inhibitor of cyanide-insensitive alternative oxidases and a promising drug candidate against African trypanosomiasis. The first step in the pathway is performed by the non-reducing polyketide synthase ascC that produces orsellinic acid by condensing acetyl-CoA with 3 malonyl-CoA units. Orsellinic acid is then prenylated by the prenyltransferase ascA to yield ilicicolinic acid B. Ilicicolinic acid B is further reduced to ilicicolin B by the reductase ascB. The halogenase ascD then chlorinates ilicicolin B to produce ilicicolin A which is converted to ilicicolin A epoxide by the cytochrome P450 monooxygenase ascE that catalyzes stereoselective epoxidation of the terminal double bond of the prenyl group. Ilicicolin A epoxide is the last common precursor for the biosynthesis of ascofuranone and ascochlorin. The terpene cyclase ascF produces a monocyclic terpene, and the cyclization reaction is proposed to be initiated by protonation of the terminal epoxide of ilicicolin A epoxide to generate a monocyclic tertiarycation, which is followed by a series of hydride and methyl shifts with abstraction of proton, leading to the formation of the (14S,15R,19R)-trimethylcyclohexanone ring structure of ilicicolin C, which is finally reduced to ascochlorin by the dehydrogenase ascG. On the other hand, ilicicolin A epoxide is hydroxylated by the cytochrome P450 monooxygenase ascH, and the resultant product is cyclized by the terpene cyclase ascI to ascofuranol via protonation-initiated epoxide ring opening, which facilitates the 6-endo-tet cyclization to form the tetrahy-drofuran ring. Finally, ascofuranol is oxidized into ascofuranone by ascJ. The sequence is that of Prenytransferase ascA from Acremonium egyptiacum (Oospora egyptiaca).